Reading from the N-terminus, the 324-residue chain is DNA repair and recombination protein RadA (324 aa).

114–121 (GEFGSGKT) contributes to the ATP binding site.

Belongs to the eukaryotic RecA-like protein family.

Functionally, involved in DNA repair and in homologous recombination. Binds and assemble on single-stranded DNA to form a nucleoprotein filament. Hydrolyzes ATP in a ssDNA-dependent manner and promotes DNA strand exchange between homologous DNA molecules. This Saccharolobus islandicus (strain Y.N.15.51 / Yellowstone #2) (Sulfolobus islandicus) protein is DNA repair and recombination protein RadA.